Reading from the N-terminus, the 103-residue chain is L-rhamnose-binding lectin ELEL-1 (103 aa).

Residues 13-102 (VCEGSSLTIS…KYLELSYDCS (90 aa)) form the SUEL-type lectin domain. 4 disulfide bridges follow: C14–C45, C23–C101, C56–C88, and C69–C75.

As to quaternary structure, homodimer; disulfide-linked. Not glycosylated.

In terms of biological role, rhamnose-binding lectin. Also binds alpha-D-melibiose, alpha-D-lactose, beta-D-lactose, methyl-alpha-D-galactopyranoside, methyl-beta-D--galactopyranoside and D-galactose but not D-arabinose, L-fucose, D-glucose, D-mannose, D-maltose, D-sucrose, N-acetyl-D-galactosamine, N-acetyl-D-glucosamine, N-acetyl-D-mannosamine-D-xylose or by glycoproteins orosomucoid, thyroglobulin, ovomucoid and porcine stomach mucin. Shows cation-independent hemagglutinating activity against rabbit and human erythrocytes. Agglutinates cells of Gram-positive bacterial species S.aureus but not those of Gram-negative E.coli. This Echinometra lucunter (Rock-boring urchin) protein is L-rhamnose-binding lectin ELEL-1.